We begin with the raw amino-acid sequence, 137 residues long: MMQPKRTKFRKAHKGRIHGVASSGATLAFGQFGLKAMEPERITARQIEAARRALTRHMKRAGRVWIRVFPDLPVSKKPAEVRMGSGKGSPELWVARVKPGRVMFEIDGVNQQIAREALTLAAAKLPIKTRFVARIAE.

Belongs to the universal ribosomal protein uL16 family. As to quaternary structure, part of the 50S ribosomal subunit.

Functionally, binds 23S rRNA and is also seen to make contacts with the A and possibly P site tRNAs. In Rhodopseudomonas palustris (strain ATCC BAA-98 / CGA009), this protein is Large ribosomal subunit protein uL16.